The primary structure comprises 372 residues: Cytochrome b (372 aa).

4 helical membrane passes run 25–45 (FGSM…FLAI), 69–90 (WIMQ…YIHI), 105–125 (WLSG…GYVL), and 170–190 (FFAL…IHII). Positions 75 and 89 each coordinate heme b. The heme b site is built by histidine 174 and histidine 188. Histidine 193 contacts a ubiquinone. The next 4 membrane-spanning stretches (helical) occupy residues 218-238 (YKDM…LSFS), 280-300 (LGGA…PFTH), 312-332 (LSQI…WTAS), and 339-358 (FISI…ITIP).

Belongs to the cytochrome b family. As to quaternary structure, the cytochrome bc1 complex contains 3 respiratory subunits (MT-CYB, CYC1 and UQCRFS1), 2 core proteins (UQCRC1 and UQCRC2) and probably 6 low-molecular weight proteins. Heme b is required as a cofactor.

It localises to the mitochondrion inner membrane. Functionally, component of the ubiquinol-cytochrome c reductase complex (complex III or cytochrome b-c1 complex) that is part of the mitochondrial respiratory chain. The b-c1 complex mediates electron transfer from ubiquinol to cytochrome c. Contributes to the generation of a proton gradient across the mitochondrial membrane that is then used for ATP synthesis. In Naja annulata annulata (Banded water cobra), this protein is Cytochrome b (MT-CYB).